A 336-amino-acid chain; its full sequence is UDP-3-O-acylglucosamine N-acyltransferase (336 aa).

The active-site Proton acceptor is His-233.

Belongs to the transferase hexapeptide repeat family. LpxD subfamily. As to quaternary structure, homotrimer.

The catalysed reaction is a UDP-3-O-[(3R)-3-hydroxyacyl]-alpha-D-glucosamine + a (3R)-hydroxyacyl-[ACP] = a UDP-2-N,3-O-bis[(3R)-3-hydroxyacyl]-alpha-D-glucosamine + holo-[ACP] + H(+). Its pathway is bacterial outer membrane biogenesis; LPS lipid A biosynthesis. In terms of biological role, catalyzes the N-acylation of UDP-3-O-acylglucosamine using 3-hydroxyacyl-ACP as the acyl donor. Is involved in the biosynthesis of lipid A, a phosphorylated glycolipid that anchors the lipopolysaccharide to the outer membrane of the cell. This is UDP-3-O-acylglucosamine N-acyltransferase from Helicobacter pylori (strain ATCC 700392 / 26695) (Campylobacter pylori).